A 428-amino-acid polypeptide reads, in one-letter code: MSAEIMKKEDNKITLKIVVGADQFEVAINKAYNKMKSSFNIPGFRKGKVPRKLVEQRYGVEVFFEDAMNIVLPDAYEGALQELNIDPIDRPEFDFGEIKKGEDVEFTAEVQVMPEFTVEGYKGIEVEKNEYNVQEEDVQNELNKLTEQNARMIAVEDRPVQDGDMVVIDYKGFVGEDQFEGGTAEKQSLTIGSNQFIPGFEEQLIGASIGDEIKVKVTFPEEYHSEELAGKEATFEVMVHEIKEKELPALDDEFAKDVSEFDTLAELKADLSTKLEESAKKRTEQEYRNNVIEAVANQVELEIPNAVIERQINNMLLDFDYQLKYQGMTLESYYQMTGTKEEDLRGQMREDAEKRAKQQLVLDRISEMEKIEATETDVSEELERMATQYKQELDKLKSNLRDQDYTSIKEGIIVRKTIDLLAENAKVS.

A PPIase FKBP-type domain is found at 163-248 (GDMVVIDYKG…VHEIKEKELP (86 aa)).

The protein belongs to the FKBP-type PPIase family. Tig subfamily.

It localises to the cytoplasm. The enzyme catalyses [protein]-peptidylproline (omega=180) = [protein]-peptidylproline (omega=0). Involved in protein export. Acts as a chaperone by maintaining the newly synthesized protein in an open conformation. Functions as a peptidyl-prolyl cis-trans isomerase. The protein is Trigger factor of Alkaliphilus metalliredigens (strain QYMF).